The following is a 994-amino-acid chain: Sarcoplasmic/endoplasmic reticulum calcium ATPase 1 (994 aa).

Residues 1–48 lie on the Cytoplasmic side of the membrane; sequence MEAAHSKSTEECLSYFGVSETTGLTPDQVKRHLEKYGPNELPAEEGKS. The helical transmembrane segment at 49 to 69 threads the bilayer; the sequence is LWELVVEQFEDLLVRILLLAA. Residues 70 to 89 lie on the Lumenal side of the membrane; it reads CISFVLAWFEEGEETVTAFV. A helical transmembrane segment spans residues 90–110; the sequence is EPFVILLILIANAIVGVWQER. At 111 to 253 the chain is on the cytoplasmic side; it reads NAENAIEALK…QDKTPLQQKL (143 aa). A helical transmembrane segment spans residues 254–273; that stretch reads DEFGEQLSKVISLICVAVWL. The Lumenal portion of the chain corresponds to 274–295; the sequence is INIGHFNDPVHGGSWFRGAIYY. The chain crosses the membrane as a helical span at residues 296–313; that stretch reads FKIAVALAVAAIPEGLPA. 4 residues coordinate Ca(2+): Val304, Ala305, Ile307, and Glu309. Topologically, residues 314–757 are cytoplasmic; that stretch reads VITTCLALGT…EEGRAIYNNM (444 aa). The active-site 4-aspartylphosphate intermediate is Asp351. Asp351 and Thr353 together coordinate Mg(2+). Thr353 is an ATP binding site. Thr441 carries the post-translational modification Phosphothreonine. Positions 442, 489, 515, and 560 each coordinate ATP. Thr569 carries the phosphothreonine modification. Ser581 is modified (phosphoserine). 3 residues coordinate ATP: Thr625, Gly626, and Asp627. Ser643 is modified (phosphoserine). Positions 678 and 684 each coordinate ATP. A Mg(2+)-binding site is contributed by Asp703. Asn706 is an ATP binding site. A helical transmembrane segment spans residues 758-777; that stretch reads KQFIRYLISSNVGEVVCIFL. 2 residues coordinate Ca(2+): Asn768 and Glu771. Residues 778–787 are Lumenal-facing; that stretch reads TAALGLPEAL. The chain crosses the membrane as a helical span at residues 788 to 808; sequence IPVQLLWVNLVTDGLPATALG. The interval 788 to 808 is interaction with PLN; sequence IPVQLLWVNLVTDGLPATALG. Residues Asn796, Thr799, and Asp800 each coordinate Ca(2+). The Cytoplasmic segment spans residues 809–828; that stretch reads FNPPDLDIMDRPPRSPKEPL. The chain crosses the membrane as a helical span at residues 829-851; it reads ISGWLFFRYMAIGGYVGAATVGA. Residues 852–897 lie on the Lumenal side of the membrane; sequence AAWWFLYAEDGPHVSYHQLTHFMQCTEHNPEFDGLDCEVFEAPEPM. A disulfide bridge links Cys876 with Cys888. Residues 898 to 917 form a helical membrane-spanning segment; the sequence is TMALSVLVTIEMCNALNSLS. Glu908 provides a ligand contact to Ca(2+). Over 918-930 the chain is Cytoplasmic; that stretch reads ENQSLLRMPPWVN. Residues 931–949 form a helical membrane-spanning segment; the sequence is IWLLGSICLSMSLHFLILY. An interaction with PLN region spans residues 932–943; that stretch reads WLLGSICLSMSL. Residues 950-964 are Lumenal-facing; it reads VDPLPMIFKLRALDF. Residues 965–985 form a helical membrane-spanning segment; that stretch reads TQWLMVLKISLPVIGLDELLK. The Cytoplasmic portion of the chain corresponds to 986-994; that stretch reads FIARNYLEG.

This sequence belongs to the cation transport ATPase (P-type) (TC 3.A.3) family. Type IIA subfamily. As to quaternary structure, interacts with sarcolipin (SLN). Interacts with phospholamban (PLN). Interacts with myoregulin (MRLN). Interacts with DWORF. Interacts with VMP1. Requires Mg(2+) as cofactor.

The protein resides in the endoplasmic reticulum membrane. It localises to the sarcoplasmic reticulum membrane. The enzyme catalyses Ca(2+)(in) + ATP + H2O = Ca(2+)(out) + ADP + phosphate + H(+). Its activity is regulated as follows. Inhibited by sarcolipin (SLN) and myoregulin (MRLN). Has also been shown to be reversibly inhibited by phospholamban (PLN) at low calcium concentrations in vitro. Dephosphorylated PLN decreases the apparent affinity of the ATPase for calcium in vitro and this inhibition is regulated by the phosphorylation of PLN. Enhanced by DWORF; DWORF increases activity by displacing sarcolipin (SLN), phospholamban (PLN) and myoregulin (MRLN). In terms of biological role, key regulator of striated muscle performance by acting as the major Ca(2+) ATPase responsible for the reuptake of cytosolic Ca(2+) into the sarcoplasmic reticulum. Catalyzes the hydrolysis of ATP coupled with the translocation of calcium from the cytosol to the sarcoplasmic reticulum lumen. Contributes to calcium sequestration involved in muscular excitation/contraction. This Mus musculus (Mouse) protein is Sarcoplasmic/endoplasmic reticulum calcium ATPase 1 (Atp2a1).